Consider the following 136-residue polypeptide: Large ribosomal subunit protein uL16 (136 aa).

It belongs to the universal ribosomal protein uL16 family. Part of the 50S ribosomal subunit.

Its function is as follows. Binds 23S rRNA and is also seen to make contacts with the A and possibly P site tRNAs. The protein is Large ribosomal subunit protein uL16 of Alteromonas mediterranea (strain DSM 17117 / CIP 110805 / LMG 28347 / Deep ecotype).